A 933-amino-acid polypeptide reads, in one-letter code: DNA repair-scaffolding protein (933 aa).

3 disordered regions span residues 1–34, 67–174, and 205–224; these read MSGARRPGTSKRKRNWHIEHPSFREERSQQLRRG, SEKT…KGTL, and YSSDSEKEEDPEHSLFIDSE. 3 stretches are compositionally biased toward basic and acidic residues: residues 16–29, 71–87, and 119–132; these read WHIEHPSFREERSQ, GITEKHLELSPKPKTET, and RDGRHGPRADRLGD. Residues 138–148 are compositionally biased toward acidic residues; the sequence is PEDEDIEDELQ. A necessary for interaction with RAD51 region spans residues 175 to 469; it reads DISDCDSCAS…GTGWTHGHEK (295 aa). A compositionally biased stretch (basic and acidic residues) spans 214-224; the sequence is DPEHSLFIDSE.

In terms of assembly, found in a complex, at least composed of BLM, RAD51 and SPIDR; the complex formation is mediated by SPIDR. Interacts (via C-terminal region) with BLM; the interaction is direct. Interacts with RAD51; the interaction is direct. Interacts (via the C-terminal region) with FIGNL1 (via N-terminal one-half region); the interaction is direct.

It is found in the nucleus. In terms of biological role, plays a role in DNA double-strand break (DBS) repair via homologous recombination (HR). Serves as a scaffolding protein that helps to promote the recruitment of DNA-processing enzymes like the helicase BLM and recombinase RAD51 to site of DNA damage, and hence contributes to maintain genomic integrity. In Mus musculus (Mouse), this protein is DNA repair-scaffolding protein (Spidr).